A 175-amino-acid polypeptide reads, in one-letter code: D-glycero-beta-D-manno-heptose-1,7-bisphosphate 7-phosphatase (175 aa).

Catalysis depends on aspartate 7, which acts as the Nucleophile. The Mg(2+) site is built by aspartate 7 and aspartate 9. Residues 7–9 (DRD), 15–19 (DSDAY), and 50–53 (TNQS) each bind substrate. The active-site Proton donor is aspartate 9. 4 residues coordinate Zn(2+): cysteine 89, histidine 91, cysteine 97, and cysteine 99. 100-101 (RK) contacts substrate. Aspartate 126 is a binding site for Mg(2+).

It belongs to the gmhB family. As to quaternary structure, monomer. The cofactor is Mg(2+). Zn(2+) serves as cofactor.

Its subcellular location is the cytoplasm. It catalyses the reaction D-glycero-beta-D-manno-heptose 1,7-bisphosphate + H2O = D-glycero-beta-D-manno-heptose 1-phosphate + phosphate. The protein operates within nucleotide-sugar biosynthesis; ADP-L-glycero-beta-D-manno-heptose biosynthesis; ADP-L-glycero-beta-D-manno-heptose from D-glycero-beta-D-manno-heptose 7-phosphate: step 2/4. Its pathway is bacterial outer membrane biogenesis; LPS core biosynthesis. Its function is as follows. Converts the D-glycero-beta-D-manno-heptose 1,7-bisphosphate (beta-HBP) intermediate into D-glycero-beta-D-manno-heptose 1-phosphate by removing the phosphate group at the C-7 position. The sequence is that of D-glycero-beta-D-manno-heptose-1,7-bisphosphate 7-phosphatase from Pseudomonas putida (strain ATCC 47054 / DSM 6125 / CFBP 8728 / NCIMB 11950 / KT2440).